Consider the following 642-residue polypeptide: Serotransferrin (642 aa).

Transferrin-like domains lie at 1-280 (GIKE…SLKK) and 290-621 (IKWC…SLRQ). 2 residues coordinate Fe(3+): Asp25 and Tyr54. Disulfide bonds link Cys77-Cys158, Cys121-Cys137, and Cys186-Cys200. Residues Thr79, Lys83, Ala85, and Gly86 each contribute to the hydrogencarbonate site. Tyr152 is a binding site for Fe(3+). His208 contacts Fe(3+). 2 disulfides stabilise this stretch: Cys293–Cys329 and Cys303–Cys320. Asp344 contacts Fe(3+). Disulfide bonds link Cys354/Cys633, Cys369/Cys594, Cys402/Cys480, Cys426/Cys622, Cys436/Cys450, Cys447/Cys463, and Cys520/Cys535. Residue Asn365 is glycosylated (N-linked (GlcNAc...) asparagine). A Fe(3+)-binding site is contributed by Tyr379. Residues Thr404, Arg408, Ala410, and Gly411 each contribute to the hydrogencarbonate site. Position 474 (Tyr474) interacts with Fe(3+). His543 is a Fe(3+) binding site.

It belongs to the transferrin family. Monomer. As to expression, brain and liver; to a lesser extent in kidney and heart.

It localises to the secreted. Its function is as follows. Transferrins are iron binding transport proteins which can bind two Fe(3+) ions in association with the binding of an anion, usually bicarbonate. The polypeptide is Serotransferrin (tf) (Gadus morhua (Atlantic cod)).